We begin with the raw amino-acid sequence, 153 residues long: Sperm surface protein Sp17 (153 aa).

Residues 74 to 117 (FKVPSGATESKEAPPEKSEPEKETPQEVVKEQETQVSFVEEVST) form a disordered region. The span at 82-106 (ESKEAPPEKSEPEKETPQEVVKEQE) shows a compositional bias: basic and acidic residues. Residues 122–151 (AAAAAVKIQAAFRGHKARKEVKIMKESSIE) enclose the IQ domain.

Homodimer. May interact with ROPN1. In terms of tissue distribution, testis- and sperm-specific.

It localises to the membrane. Its function is as follows. Sperm surface zona pellucida binding protein. Helps to bind spermatozoa to the zona pellucida with high affinity. Might function in binding zona pellucida and carbohydrates. This Notamacropus eugenii (Tammar wallaby) protein is Sperm surface protein Sp17 (SPA17).